The following is a 768-amino-acid chain: DNA replication licensing factor MCM3 homolog 3 (768 aa).

An MCM domain is found at 290-497 (TFDLLGNSLA…IDRQISEHVA (208 aa)). 340 to 347 (GDPSVAKS) contacts ATP. An Arginine finger motif is present at residues 472–475 (SRFD). Basic and acidic residues predominate over residues 661–670 (EMKQQADHDA). The tract at residues 661-690 (EMKQQADHDAGATGGTVDGHGSSGNDPMDV) is disordered. The segment covering 672 to 682 (ATGGTVDGHGS) has biased composition (gly residues).

This sequence belongs to the MCM family.

Its subcellular location is the nucleus. It carries out the reaction ATP + H2O = ADP + phosphate + H(+). Acts as a factor that allows the DNA to undergo a single round of replication per cell cycle. Required for DNA replication and cell proliferation. May act as a component of the MCM complex which is the putative replicative helicase of the replication licensing system in eukaryotic cells. In Zea mays (Maize), this protein is DNA replication licensing factor MCM3 homolog 3 (ROA3).